Reading from the N-terminus, the 471-residue chain is MTSATNGGSLWGARFAGAPADALAALSKSTHFDWRLARYDLAGSRAHARVLQRAGLLTDVELDGMLTALDGLDADVTSGAFVAAESDEDVHGALERGLIERAGPELGGKLRAGRSRNDQIAAFGRMFLRDHARLVARGVLATIDALLAQATAHHGVAMPGRTHLQHAQPVLLSHHLMAHAWALLRDVQRLQDWDRRAAVSPYGSGALAGSSLGLDPNAVADELGFDSAVWNSIDGTASRDVFAEFSWIAAMIGVDLSRISEEIILWATKEFSFVTLDDAFSTGSSIMPQKKNPDVAELARGKAGRLIGDLTGLLATLKGLPLAYNRDLQEDKEPVFDAADTLELLLPAVSGMIATLDFNTERMEELAPLGFALATDVADWLVRQGVPFRDAHELSGAAVKQAESRGVELWDLSDAEYAAISPQLTPELRTVLSTEGSLASRSAQGGTAPSAVLAQRAAFEAQLAPVRDFAR.

Belongs to the lyase 1 family. Argininosuccinate lyase subfamily.

The protein localises to the cytoplasm. The catalysed reaction is 2-(N(omega)-L-arginino)succinate = fumarate + L-arginine. The protein operates within amino-acid biosynthesis; L-arginine biosynthesis; L-arginine from L-ornithine and carbamoyl phosphate: step 3/3. The chain is Argininosuccinate lyase from Renibacterium salmoninarum (strain ATCC 33209 / DSM 20767 / JCM 11484 / NBRC 15589 / NCIMB 2235).